A 337-amino-acid chain; its full sequence is Draxin (337 aa).

The N-terminal stretch at 1 to 24 (MLLLALLLLLELSLAGSLGPGSSA) is a signal peptide. Disordered stretches follow at residues 36 to 67 (GPAL…WTQD), 107 to 133 (RPYP…KRRK), and 234 to 261 (WPST…KGEP). 2 stretches are compositionally biased toward basic residues: residues 122-133 (VKKRGREHKRRK) and 237-246 (TRKKEKHRGK). N-linked (GlcNAc...) asparagine glycosylation occurs at Asn-252.

The protein belongs to the draxin family. Interacts with LRP6.

It localises to the secreted. Functionally, chemorepulsive axon guidance protein required for the development of spinal cord and forebrain commissures. Acts as a chemorepulsive guidance protein for commissural axons during development. Able to inhibit or repel neurite outgrowth from dorsal spinal cord. Inhibits the stabilization of cytosolic beta-catenin (CTNNB1) via its interaction with LRP6, thereby acting as an antagonist of Wnt signaling pathway. The sequence is that of Draxin from Bos taurus (Bovine).